The following is a 180-amino-acid chain: Translation machinery-associated protein 16 homolog (180 aa).

Basic and acidic residues predominate over residues 1–12; that stretch reads MTNLRKELEKCK. The disordered stretch occupies residues 1–32; that stretch reads MTNLRKELEKCKHPNSRKTKALGKKARRQNNK. Residues 13-32 show a composition bias toward basic residues; that stretch reads HPNSRKTKALGKKARRQNNK.

The protein belongs to the TMA16 family.

The protein is Translation machinery-associated protein 16 homolog of Drosophila melanogaster (Fruit fly).